We begin with the raw amino-acid sequence, 190 residues long: dCTP deaminase (190 aa).

DCTP-binding positions include lysine 111 to arginine 116, threonine 135 to glutamate 137, glutamine 156, tyrosine 172, and glutamine 182. Glutamate 137 (proton donor/acceptor) is an active-site residue.

This sequence belongs to the dCTP deaminase family. Homotrimer.

It carries out the reaction dCTP + H2O + H(+) = dUTP + NH4(+). Its pathway is pyrimidine metabolism; dUMP biosynthesis; dUMP from dCTP (dUTP route): step 1/2. In terms of biological role, catalyzes the deamination of dCTP to dUTP. The protein is dCTP deaminase of Stenotrophomonas maltophilia (strain K279a).